We begin with the raw amino-acid sequence, 1875 residues long: COPII coat assembly protein sec16 (1875 aa).

Disordered regions lie at residues 34–140, 211–241, 258–814, 835–868, 1413–1443, 1475–1717, and 1733–1875; these read PESR…QANG, EDKD…DNED, PETE…YAPS, GTQN…LLSP, SDAA…RSPS, LSSS…IRAK, and WVNK…VMAK. 2 stretches are compositionally biased toward basic and acidic residues: residues 93-116 and 214-223; these read TELK…HPDD and DAMPHGEISN. Polar residues-rich tracts occupy residues 273 to 290 and 322 to 360; these read NSPQ…NQLD and KSTT…SAQN. Acidic residues-rich tracts occupy residues 378–391 and 399–409; these read LSDD…PEDD and ELDDDDDDLLL. Composition is skewed to polar residues over residues 413 to 428 and 454 to 466; these read STAN…NQDH and ISYT…TSDL. The span at 503-512 shows a compositional bias: basic and acidic residues; that stretch reads SFAERSKEGY. A compositionally biased stretch (pro residues) spans 539-559; sequence GNLPPPPPRSSSIPAPSPQPS. Low complexity-rich tracts occupy residues 596 to 607 and 660 to 674; these read RPASSGRYTPNP and LLAP…VPGA. Composition is skewed to pro residues over residues 692 to 702 and 766 to 781; these read LPSPRYSPAPP and GLPP…PPVI. Positions 853 to 868 are enriched in low complexity; it reads PRRSQTQSPSQQLLSP. Residues 1434-1443 are compositionally biased toward polar residues; it reads GTPTVSRSPS. Residues 1484–1495 are compositionally biased toward low complexity; the sequence is GRSSLDSQRSSS. Composition is skewed to polar residues over residues 1531-1541, 1563-1572, and 1587-1599; these read GYQSTPPQTSY, PSQTLDNVSP, and FETN…SQFE. The span at 1661–1683 shows a compositional bias: basic and acidic residues; sequence KAERARRDREADEAFRKAAEADA. Positions 1775-1785 are enriched in low complexity; the sequence is TPPLAALGAGS.

The protein belongs to the SEC16 family.

Its subcellular location is the endoplasmic reticulum membrane. Involved in the initiation of assembly of the COPII coat required for the formation of transport vesicles from the endoplasmic reticulum (ER) and the selection of cargo molecules. Also involved in autophagy. This is COPII coat assembly protein sec16 (sec16) from Aspergillus clavatus (strain ATCC 1007 / CBS 513.65 / DSM 816 / NCTC 3887 / NRRL 1 / QM 1276 / 107).